The following is a 239-amino-acid chain: MRSGVIAQKVGMTRVFTETGEHIPVTVLKLGNCQVVGHRTTEKNGYVALQLGSGSRKTVYMPKAERGQFAVAKVEPKRKVAEFRVSEDSLIPVGAEILADHFVVGQFVDVTGTTVGKGFAGGMKRWNFGGLRATHGVSISHRSIGSTGGRQDPGKTWKNKKMPGHMGVDRVTTLNLRVVQTDVERGLILVEGAVPGSKGGWISVRDAVKKPLPKEAPKPGKFKVAGEQAAEAPAVQEGA.

Disordered stretches follow at residues 140–166 (SHRS…PGHM) and 211–239 (PLPK…QEGA). An N5-methylglutamine modification is found at Gln-151.

The protein belongs to the universal ribosomal protein uL3 family. In terms of assembly, part of the 50S ribosomal subunit. Forms a cluster with proteins L14 and L19. Post-translationally, methylated by PrmB.

Its function is as follows. One of the primary rRNA binding proteins, it binds directly near the 3'-end of the 23S rRNA, where it nucleates assembly of the 50S subunit. This is Large ribosomal subunit protein uL3 from Bradyrhizobium sp. (strain BTAi1 / ATCC BAA-1182).